Consider the following 91-residue polypeptide: Kazal-type trypsin inhibitor (91 aa).

Positions 1–22 (MRHIGVFVGVLALALVLLVVEA) are cleaved as a signal peptide. The Kazal-like domain maps to 25-78 (DAERGVCACPRIYMPVCGSNLKTYNNDCLLRCEINSDLGRANNLRKIADQACDN). Cystine bridges form between Cys31/Cys56, Cys33/Cys52, and Cys41/Cys76. Asn78 carries N-linked (GlcNAc...) asparagine glycosylation.

In terms of assembly, interacts with human PLG (plasmin). As to expression, female salivary gland. Female gut at 3 and 24 hours after blood feeding. Female carcass. Male tissues. Not detected in ovary and fat body at 3 and 24 hours after blood feeding.

The protein resides in the secreted. Anticoagulant protein that decreases host thrombin (F2) activity via an uncompetitive inhibition mechanism. Inhibits amidolytic activity of host plasmin (PLG). Inhibits amidolytic activity of host trypsin. Inhibits trypsin-like endogenous activity from gut of female mosquitoes 24 hours after feeding and weakly affects enzyme activity from gut 3 hours after feeding, suggesting a possible role as an inhibitor of endogenous proteases. In terms of biological role, (Microbial infection) Limits host plasmin-mediated enhancement of dengue virus type 2 infection in mosquito midgut. This is Kazal-type trypsin inhibitor from Aedes aegypti (Yellowfever mosquito).